Reading from the N-terminus, the 154-residue chain is Myoglobin (154 aa).

A Globin domain is found at 2–148; sequence GLSDGEWQLV…FRKDIAAKYK (147 aa). Ser-4 carries the phosphoserine modification. Nitrite is bound at residue His-65. His-65 lines the O2 pocket. Thr-68 bears the Phosphothreonine mark. Position 94 (His-94) interacts with heme b.

Belongs to the globin family. In terms of assembly, monomeric.

Its subcellular location is the cytoplasm. It localises to the sarcoplasm. It carries out the reaction Fe(III)-heme b-[protein] + nitric oxide + H2O = Fe(II)-heme b-[protein] + nitrite + 2 H(+). The enzyme catalyses H2O2 + AH2 = A + 2 H2O. Its function is as follows. Monomeric heme protein which primary function is to store oxygen and facilitate its diffusion within muscle tissues. Reversibly binds oxygen through a pentacoordinated heme iron and enables its timely and efficient release as needed during periods of heightened demand. Depending on the oxidative conditions of tissues and cells, and in addition to its ability to bind oxygen, it also has a nitrite reductase activity whereby it regulates the production of bioactive nitric oxide. Under stress conditions, like hypoxia and anoxia, it also protects cells against reactive oxygen species thanks to its pseudoperoxidase activity. This chain is Myoglobin (MB), found in Orcinus orca (Killer whale).